Consider the following 156-residue polypeptide: Translation initiation factor IF-1, chloroplastic (156 aa).

The N-terminal 81 residues, 1-81 (MASLSWWNPA…RRTTSIQCLS (81 aa)), are a transit peptide targeting the chloroplast. The tract at residues 51–79 (KSLLVKTQQQSKKKKNNSTNSRRTTSIQC) is disordered. Residues 67-76 (NSTNSRRTTS) are compositionally biased toward low complexity. The S1-like domain maps to 82–151 (QEQKWTHEGS…SKGRIIYRLR (70 aa)).

The protein belongs to the IF-1 family. As to quaternary structure, component of the 30S ribosomal translation pre-initiation complex which assembles on the 30S ribosome in the order IF-2 and IF-3, IF-1 and N-formylmethionyl-tRNA(fMet); mRNA recruitment can occur at any time during PIC assembly.

The protein localises to the plastid. Its subcellular location is the chloroplast. Functionally, one of the essential components for the initiation of protein synthesis. Stabilizes the binding of IF-2 and IF-3 on the 30S subunit to which N-formylmethionyl-tRNA(fMet) subsequently binds. Helps modulate mRNA selection, yielding the 30S pre-initiation complex (PIC). Upon addition of the 50S ribosomal subunit IF-1, IF-2 and IF-3 are released leaving the mature 70S translation initiation complex. The polypeptide is Translation initiation factor IF-1, chloroplastic (infA) (Solanum lycopersicum (Tomato)).